Here is a 267-residue protein sequence, read N- to C-terminus: Ribosomal RNA small subunit methyltransferase A (267 aa).

S-adenosyl-L-methionine contacts are provided by N18, L20, G45, E66, D91, and N112.

The protein belongs to the class I-like SAM-binding methyltransferase superfamily. rRNA adenine N(6)-methyltransferase family. RsmA subfamily.

It is found in the cytoplasm. It carries out the reaction adenosine(1518)/adenosine(1519) in 16S rRNA + 4 S-adenosyl-L-methionine = N(6)-dimethyladenosine(1518)/N(6)-dimethyladenosine(1519) in 16S rRNA + 4 S-adenosyl-L-homocysteine + 4 H(+). Functionally, specifically dimethylates two adjacent adenosines (A1518 and A1519) in the loop of a conserved hairpin near the 3'-end of 16S rRNA in the 30S particle. May play a critical role in biogenesis of 30S subunits. The polypeptide is Ribosomal RNA small subunit methyltransferase A (Shewanella amazonensis (strain ATCC BAA-1098 / SB2B)).